The primary structure comprises 166 residues: 2S seed storage protein 4 (166 aa).

The N-terminal stretch at 1–21 (MANKLFLVCAALALCFILTNA) is a signal peptide. 2 consecutive propeptides follow at residues 22-37 (SVYR…DASN) and 73-88 (GPSL…DIEN).

It belongs to the 2S seed storage albumins family. The mature protein consists of a small and a large chain linked by disulfide bonds.

In terms of biological role, this is a 2S seed storage protein. This is 2S seed storage protein 4 (AT2S4) from Arabidopsis thaliana (Mouse-ear cress).